We begin with the raw amino-acid sequence, 340 residues long: Guanine nucleotide-binding protein G(I)/G(S)/G(T) subunit beta-3 (340 aa).

WD repeat units follow at residues 53 to 83 (GHLA…IVWD), 95 to 125 (LRSS…SIYS), 141 to 170 (AHTG…ALWD), 182 to 212 (GHTG…KLWD), 224 to 254 (GHES…RLFD), 268 to 298 (SIIC…NIWD), and 310 to 340 (GHDN…KVWN).

This sequence belongs to the WD repeat G protein beta family. In terms of assembly, g proteins are composed of 3 units, alpha, beta and gamma. Interacts with RASD2.

It localises to the cytoplasm. The protein localises to the perinuclear region. Functionally, guanine nucleotide-binding proteins (G proteins) are involved as a modulator or transducer in various transmembrane signaling systems. The beta and gamma chains are required for the GTPase activity, for replacement of GDP by GTP, and for G protein-effector interaction. The sequence is that of Guanine nucleotide-binding protein G(I)/G(S)/G(T) subunit beta-3 (GNB3) from Canis lupus familiaris (Dog).